Consider the following 354-residue polypeptide: Thiamine thiazole synthase 1, chloroplastic (354 aa).

The transit peptide at 1-43 directs the protein to the chloroplast; that stretch reads MATTAASSLLKSSFAGSRLPSATRAPSSVVVSTGGAPRTAAIS. Substrate is bound by residues alanine 96, 116-117, glycine 124, and valine 190; that span reads EQ. Position 219 is a 2,3-didehydroalanine (Cys) (cysteine 219). Residues aspartate 221, histidine 236, methionine 288, and 298-300 each bind substrate; that span reads RMG.

It belongs to the THI4 family. As to quaternary structure, homooctamer. Fe cation is required as a cofactor. Post-translationally, during the catalytic reaction, a sulfide is transferred from Cys-219 to a reaction intermediate, generating a dehydroalanine residue.

The protein localises to the plastid. It localises to the chloroplast. The enzyme catalyses [ADP-thiazole synthase]-L-cysteine + glycine + NAD(+) = [ADP-thiazole synthase]-dehydroalanine + ADP-5-ethyl-4-methylthiazole-2-carboxylate + nicotinamide + 3 H2O + 2 H(+). Functionally, involved in biosynthesis of the thiamine precursor thiazole. Catalyzes the conversion of NAD and glycine to adenosine diphosphate 5-(2-hydroxyethyl)-4-methylthiazole-2-carboxylic acid (ADT), an adenylated thiazole intermediate. The reaction includes an iron-dependent sulfide transfer from a conserved cysteine residue of the protein to a thiazole intermediate. The enzyme can only undergo a single turnover, which suggests it is a suicide enzyme. May have additional roles in adaptation to various stress conditions and in DNA damage tolerance. The sequence is that of Thiamine thiazole synthase 1, chloroplastic from Sorghum bicolor (Sorghum).